The primary structure comprises 190 residues: UPF0301 protein DP2218 (190 aa).

Belongs to the UPF0301 (AlgH) family.

The polypeptide is UPF0301 protein DP2218 (Desulfotalea psychrophila (strain LSv54 / DSM 12343)).